The primary structure comprises 660 residues: Protein NEDD1 (660 aa).

WD repeat units lie at residues Met1–His31, Thr32–Leu71, Ala75–Ser114, Asp117–Pro156, Gly160–Asn200, Val204–Thr244, Val246–Lys285, and Ala289–Ser332. The residue at position 325 (Ser325) is a Phosphoserine. The segment at Gln369–Ser411 is disordered. The residue at position 382 (Thr382) is a Phosphothreonine; by PLK1. Ser397 bears the Phosphoserine; by PLK1 mark. A Phosphoserine modification is found at Ser411. Position 426 is a phosphoserine; by PLK1 (Ser426). 2 positions are modified to phosphoserine: Ser468 and Ser516. Residues Gly507–Arg523 show a composition bias toward polar residues. A disordered region spans residues Gly507–Glu532. A Phosphothreonine; by CDK1 modification is found at Thr550. The residue at position 637 (Ser637) is a Phosphoserine; by PLK1.

As to quaternary structure, interacts with FAM29A. Interacts with HSPA1A and HSPA1B. Interacts with gamma-tubulin in a HSPA1A/B-dependent manner. Post-translationally, during mitosis, prior phosphorylation on Thr-550 by CDK1 promotes subsequent phosphorylation by PLK1 on Thr-382, Ser-397, Ser-426 and Ser-637. Phosphorylated NEDD1 can interact with gamma-tubulin for targeting the gamma-tubulin ring complex (gTuRC) to the centrosome, an important step for spindle formation.

The protein localises to the cytoplasm. Its subcellular location is the cytoskeleton. It is found in the microtubule organizing center. The protein resides in the centrosome. Functionally, required for mitosis progression. Promotes the nucleation of microtubules from the spindle. This chain is Protein NEDD1 (NEDD1), found in Homo sapiens (Human).